Consider the following 232-residue polypeptide: Anti-sigma-K factor RskA (232 aa).

Topologically, residues 1 to 90 are cytoplasmic; the sequence is MTEHTDFELL…EVRRQSRWRT (90 aa). A helical membrane pass occupies residues 91-111; sequence AAFASAAAIAVGLGAFGLGVL. Topologically, residues 112–232 are extracellular; sequence TRPSPPPTVA…GTILAELPLG (121 aa).

This sequence belongs to the anti-sigma-K factor family.

It localises to the cell membrane. In terms of biological role, an anti-sigma factor for extracytoplasmic function (ECF) sigma factor SigK. ECF sigma factors are held in an inactive form by an anti-sigma factor until released by regulated intramembrane proteolysis (RIP). RIP occurs when an extracytoplasmic signal triggers a concerted proteolytic cascade to transmit information and elicit cellular responses. The membrane-spanning regulatory substrate protein is first cut extracytoplasmically (site-1 protease, S1P), then within the membrane itself (site-2 protease, S2P, Rip1), while cytoplasmic proteases finish degrading the regulatory protein, liberating the sigma factor. In Mycobacterium tuberculosis (strain ATCC 25177 / H37Ra), this protein is Anti-sigma-K factor RskA (rskA).